We begin with the raw amino-acid sequence, 406 residues long: Mitochondrial ribosome-associated GTPase 2 (406 aa).

Residues 15–406 are localized in the mitochondria; sequence FEGVGHWALS…LGQGRQPLRW (392 aa). The not localized in the mitochondria stretch occupies residues 30 to 406; sequence KPSRLLPQQA…LGQGRQPLRW (377 aa). The region spanning 70 to 224 is the Obg domain; it reads RYFVDYRRVL…RVLHLELKTV (155 aa). An OBG-type G domain is found at 225–390; that stretch reads AHAGMVGFPN…LLLHLKVLYD (166 aa). Residues 231–238, 256–260, 278–281, 345–348, and 371–373 each bind GTP; these read GFPNAGKS, FTTLK, DIPG, NKID, and SAL. Residues Ser-238 and Thr-258 each coordinate Mg(2+).

This sequence belongs to the TRAFAC class OBG-HflX-like GTPase superfamily. OBG GTPase family. In terms of assembly, associates with the mitochondrial ribosome large subunit; the association occurs in a GTP-dependent manner. It depends on Mg(2+) as a cofactor.

It is found in the mitochondrion. The protein resides in the mitochondrion inner membrane. In terms of biological role, plays a role in the regulation of the mitochondrial ribosome assembly and of translational activity. Displays GTPase activity. Involved in the ribosome maturation process. In Pongo abelii (Sumatran orangutan), this protein is Mitochondrial ribosome-associated GTPase 2 (MTG2).